A 700-amino-acid polypeptide reads, in one-letter code: Elongation factor G 2 (700 aa).

One can recognise a tr-type G domain in the interval Glu8–Ile290. GTP-binding positions include Ala17–Thr24, Asp88–His92, and Asn142–Asp145.

The protein belongs to the TRAFAC class translation factor GTPase superfamily. Classic translation factor GTPase family. EF-G/EF-2 subfamily.

The protein resides in the cytoplasm. In terms of biological role, catalyzes the GTP-dependent ribosomal translocation step during translation elongation. During this step, the ribosome changes from the pre-translocational (PRE) to the post-translocational (POST) state as the newly formed A-site-bound peptidyl-tRNA and P-site-bound deacylated tRNA move to the P and E sites, respectively. Catalyzes the coordinated movement of the two tRNA molecules, the mRNA and conformational changes in the ribosome. This chain is Elongation factor G 2 (fusB), found in Ralstonia nicotianae (strain ATCC BAA-1114 / GMI1000) (Ralstonia solanacearum).